A 217-amino-acid polypeptide reads, in one-letter code: Uridylate kinase (217 aa).

5-9 provides a ligand contact to ATP; it reads KLTGR. Glycine 37 contributes to the UMP binding site. ATP-binding residues include glycine 38 and arginine 42. Residues aspartate 59 and 107–113 each bind UMP; that span reads FQPGQST. Asparagine 134, tyrosine 139, and aspartate 142 together coordinate ATP.

This sequence belongs to the UMP kinase family. Homohexamer.

The protein localises to the cytoplasm. It carries out the reaction UMP + ATP = UDP + ADP. It functions in the pathway pyrimidine metabolism; CTP biosynthesis via de novo pathway; UDP from UMP (UMPK route): step 1/1. With respect to regulation, inhibited by UTP. Functionally, catalyzes the reversible phosphorylation of UMP to UDP. The polypeptide is Uridylate kinase (Pyrobaculum calidifontis (strain DSM 21063 / JCM 11548 / VA1)).